Consider the following 393-residue polypeptide: NAD(P)H-quinone oxidoreductase subunit H, chloroplastic (393 aa).

It belongs to the complex I 49 kDa subunit family. In terms of assembly, NDH is composed of at least 16 different subunits, 5 of which are encoded in the nucleus.

It is found in the plastid. It localises to the chloroplast thylakoid membrane. The enzyme catalyses a plastoquinone + NADH + (n+1) H(+)(in) = a plastoquinol + NAD(+) + n H(+)(out). The catalysed reaction is a plastoquinone + NADPH + (n+1) H(+)(in) = a plastoquinol + NADP(+) + n H(+)(out). Functionally, NDH shuttles electrons from NAD(P)H:plastoquinone, via FMN and iron-sulfur (Fe-S) centers, to quinones in the photosynthetic chain and possibly in a chloroplast respiratory chain. The immediate electron acceptor for the enzyme in this species is believed to be plastoquinone. Couples the redox reaction to proton translocation, and thus conserves the redox energy in a proton gradient. This is NAD(P)H-quinone oxidoreductase subunit H, chloroplastic from Calycanthus floridus var. glaucus (Eastern sweetshrub).